The primary structure comprises 1982 residues: Ras guanine nucleotide exchange factor V (1982 aa).

15 LRR repeats span residues 1–26 (MGNINSICLNNNGKYRIDSISCSLEG), 47–68 (LTQLLIIRECKLKQIPVNITNL), 69–94 (SNLSELILSDNKLSQLPWSLPPPFKP), 105–128 (NENLVRLDLSNNRFTEFPSSVFVL), 130–151 (NLKQLILCNNQLTNMNVTLCGG), 164–187 (ACQLEELKLSNNNFTIFPSIIGDQ), 188–210 (LTTLKSLDLSGNTITSLPNSFSN), 212–234 (VSLTSLNLKSNKFTCFPPSLCTL), 236–257 (KLVHLNLSCNQILVSPSDHTLG), 261–284 (LPSLEKLELQHNRFAHFPMDILEI), 286–307 (SLRVLKLQDNDIDKIPDKIGNL), 308–330 (LNLNELFLSENKITQLPSTIGEL), 331–352 (INLRKLYLEYNKIGSLPQEFSK), 354–376 (SKLNILILHNNDLKFVPDQLHSL), and 378–399 (QLLRLSLDENQLSSSDQKLIKS). At 1–1831 (MGNINSICLN…IANAFYELRN (1831 aa)) the chain is on the extracellular side. Disordered regions lie at residues 414-436 (YGSTMNGTGTTSSSGSASTSTHG), 457-532 (NQIN…NKKQ), and 615-654 (NNSGGGDSMNGSGGNINNSGGSGSGCGTISGSTTKQRRGS). Composition is skewed to low complexity over residues 415-436 (GSTMNGTGTTSSSGSASTSTHG) and 457-495 (NQINNNNNNNNNNNNNNNNNNNSSNNNSGTNSLSSTPNG). The stretch at 443–466 (DILLSSVTLNNSILNQINNNNNNN) is one LRR 16 repeat. The span at 506-520 (LTISRSLFRGNSSNL) shows a compositional bias: polar residues. A coiled-coil region spans residues 515–567 (GNSSNLESEKEDFINKKQQQQQQQQQQQQQQQQQQQQQQQQQQQQQQQQQQLG). Residues 592 to 615 (EDDIQKMQLGLEALSNLETSIGSN) form an LRR 17 repeat. The span at 616–642 (NSGGGDSMNGSGGNINNSGGSGSGCGT) shows a compositional bias: gly residues. LRR repeat units lie at residues 657-684 (LPPTNAFKLSPNVVSSSYNTLPASVMSG) and 773-796 (HSNLSQSLSINNLAHRLPTSLSSS). Disordered stretches follow at residues 756–778 (QSSTNSFLPPQHQHHHHHSNLSQ) and 807–829 (LQFQQQQQHHHHNHNNHQNSNQP). In terms of domain architecture, GBD/FH3 spans 832 to 1236 (TIVPSFSKFK…QIKYSIDRYG (405 aa)). 4 LRR repeats span residues 979–1003 (LLGILQFNLDNAQLQFDEEKVGYCL), 1075–1100 (SPYVPLVALLRNPIIEMPTKTTVFKI), 1239–1263 (VPAIGSLVLDGSILQSSGSQSRWVD), and 1689–1712 (VQNMPAQSIEDDGLKELTELFVDL). Residues 1595-1717 (KDRRVSSVTL…LFVDLSTKSY (123 aa)) enclose the N-terminal Ras-GEF domain. The 228-residue stretch at 1747 to 1974 (DEIEIARQLS…YEMSLSAEPR (228 aa)) folds into the Ras-GEF domain. A helical membrane pass occupies residues 1832–1848 (YHLLMAIISGLNASPVL). Residues 1849–1982 (RLKYTKGKLS…PRNAERYDIQ (134 aa)) lie on the Cytoplasmic side of the membrane. LRR repeat units follow at residues 1865 to 1888 (LDTLEELMSTQSSMKNYRADLAAA) and 1917 to 1941 (RINFKKLEMYKKTIATLQNFSLFPY).

The protein resides in the membrane. Its function is as follows. Promotes the exchange of Ras-bound GDP by GTP. In Dictyostelium discoideum (Social amoeba), this protein is Ras guanine nucleotide exchange factor V (gefV).